The chain runs to 545 residues: Chaperonin GroEL (545 aa).

ATP contacts are provided by residues 30–33 (TLGP), Lys51, 87–91 (DGTTT), Gly415, and Asp495.

This sequence belongs to the chaperonin (HSP60) family. In terms of assembly, forms a cylinder of 14 subunits composed of two heptameric rings stacked back-to-back. Interacts with the co-chaperonin GroES.

Its subcellular location is the cytoplasm. The enzyme catalyses ATP + H2O + a folded polypeptide = ADP + phosphate + an unfolded polypeptide.. Its function is as follows. Together with its co-chaperonin GroES, plays an essential role in assisting protein folding. The GroEL-GroES system forms a nano-cage that allows encapsulation of the non-native substrate proteins and provides a physical environment optimized to promote and accelerate protein folding. The chain is Chaperonin GroEL from Shewanella sp. (strain ANA-3).